We begin with the raw amino-acid sequence, 317 residues long: Serine/threonine-protein phosphatase PP1 isozyme 1 (317 aa).

Asp-75, His-77, Asp-103, and Asn-135 together coordinate Mn(2+). The active-site Proton donor is His-136. Mn(2+) is bound by residues His-184 and His-259.

It belongs to the PPP phosphatase family. PP-1 subfamily. The cofactor is Mn(2+).

The catalysed reaction is O-phospho-L-seryl-[protein] + H2O = L-seryl-[protein] + phosphate. The enzyme catalyses O-phospho-L-threonyl-[protein] + H2O = L-threonyl-[protein] + phosphate. The chain is Serine/threonine-protein phosphatase PP1 isozyme 1 (NPP1) from Nicotiana tabacum (Common tobacco).